Consider the following 307-residue polypeptide: Acetaldehyde dehydrogenase 1 (307 aa).

The active-site Acyl-thioester intermediate is the Cys132. NAD(+) is bound by residues 163–171 (SVGPGTRKN) and Asn274.

The protein belongs to the acetaldehyde dehydrogenase family.

The enzyme catalyses acetaldehyde + NAD(+) + CoA = acetyl-CoA + NADH + H(+). The polypeptide is Acetaldehyde dehydrogenase 1 (tesF) (Comamonas testosteroni (Pseudomonas testosteroni)).